The chain runs to 546 residues: MELISSSTIGNSALCLTLISILIFFFLTTTTIPTFPDHPLRSLLDDSQITTNSSSIVNPKSSCVSSRSHDNGGVINYFSLHYCIFNENLFFSIPILSLLILLHFYILIKTAQTHFSTVTTKLADRLNLSPSMAAVTLLALGNGAPDVFASVAALRGGQYRTGFGAILSAGTFVSAFVVGFVAIYAAPFPVDAASFVRDVLFYLIAALFLFYVYLSGEIFVWQAIGFVGFYIFFVGFVFWMDFGTNVEKGKSISEEEKDLLRLQDCEIAAGSLGSYKAEKEHQFSGIFRLYGTISRMWETPVSVLLNLTIPKPSPSEWSRFYRSANIVFCPFALLYTCNSFVQLNHPISFLFPNTHLPLWLVVLFMTSSLAFLHFTVEKQPPKTEQLPVIVVAFIMSVFWISTIAGELLNCLAALGTLLKLPPALLGLTVLAWGNSVGDLVADVAVAKAGRPAMAMAGCFAGPMFNMLVGLGSALVMQTANVYPDAYKLGFHVGIVIAFVFLLLSLMGSLLVITWSRFRVPRFWGICLVGLYVAFTFVSLIIASVST.

The next 13 membrane-spanning stretches (helical) occupy residues 13–33 (ALCL…TTIP), 88–108 (NLFF…YILI), 134–154 (AVTL…VAAL), 163–183 (FGAI…FVAI), 194–214 (SFVR…YVYL), 218–238 (IFVW…GFVF), 323–343 (SANI…FVQL), 356–376 (LPLW…HFTV), 388–408 (VIVV…GELL), 423–445 (ALLG…DVAV), 455–475 (MAGC…SALV), 492–512 (VGIV…LLVI), and 522–542 (FWGI…LIIA).

Belongs to the Ca(2+):cation antiporter (CaCA) (TC 2.A.19) family. Cation/calcium exchanger (CCX) subfamily.

The protein resides in the cell membrane. Functionally, membrane-localized H(+)-dependent K(+) and Na(+) transporter. The chain is Cation/calcium exchanger 5 (CCX5) from Arabidopsis thaliana (Mouse-ear cress).